A 505-amino-acid chain; its full sequence is Deoxyguanosinetriphosphate triphosphohydrolase (505 aa).

Positions 66-273 (RLTHSMEVQQ…MEAADDISYC (208 aa)) constitute an HD domain.

The protein belongs to the dGTPase family. Type 1 subfamily. As to quaternary structure, homotetramer. The cofactor is Mg(2+).

It carries out the reaction dGTP + H2O = 2'-deoxyguanosine + triphosphate + H(+). Functionally, dGTPase preferentially hydrolyzes dGTP over the other canonical NTPs. This is Deoxyguanosinetriphosphate triphosphohydrolase from Escherichia coli O7:K1 (strain IAI39 / ExPEC).